Here is a 173-residue protein sequence, read N- to C-terminus: Putative metal-dependent hydrolase BCE33L2441 (173 aa).

3 residues coordinate Zn(2+): histidine 65, histidine 156, and histidine 160.

This sequence belongs to the metal hydrolase YfiT family. As to quaternary structure, homodimer. Zn(2+) is required as a cofactor.

The protein localises to the cytoplasm. In terms of biological role, possible metal-dependent hydrolase. This is Putative metal-dependent hydrolase BCE33L2441 from Bacillus cereus (strain ZK / E33L).